Reading from the N-terminus, the 214-residue chain is Probable transaldolase (214 aa).

K83 (schiff-base intermediate with substrate) is an active-site residue.

The protein belongs to the transaldolase family. Type 3B subfamily.

The protein localises to the cytoplasm. The enzyme catalyses D-sedoheptulose 7-phosphate + D-glyceraldehyde 3-phosphate = D-erythrose 4-phosphate + beta-D-fructose 6-phosphate. It functions in the pathway carbohydrate degradation; pentose phosphate pathway; D-glyceraldehyde 3-phosphate and beta-D-fructose 6-phosphate from D-ribose 5-phosphate and D-xylulose 5-phosphate (non-oxidative stage): step 2/3. In terms of biological role, transaldolase is important for the balance of metabolites in the pentose-phosphate pathway. This chain is Probable transaldolase, found in Alkaliphilus metalliredigens (strain QYMF).